The chain runs to 511 residues: MFS-type transporper mpsC (511 aa).

Basic and acidic residues predominate over residues 1 to 35 (MTSSTESKHSNDESTDLEKQDAEESHGLPEERKQD). The disordered stretch occupies residues 1 to 65 (MTSSTESKHS…PDDPANPMNW (65 aa)). 7 consecutive transmembrane segments (helical) span residues 74-94 (VVMA…FAPA), 108-128 (ITAA…PLVI), 147-167 (ITVA…FLVF), 169-189 (LITG…IADV), 201-221 (AFAM…GFIA), 228-248 (WVFR…YFVM), and 303-323 (PITL…ILLF). Asn337 carries N-linked (GlcNAc...) asparagine glycosylation. The next 5 helical transmembrane spans lie at 342-362 (GLSY…FGML), 383-403 (LLLM…YGWT), 411-431 (ILPM…MMPI), 443-465 (VAAS…LPLA), and 476-496 (GWGN…PILF).

Belongs to the major facilitator superfamily.

It localises to the membrane. MFS-type transporper; part of the gene cluster that mediates the biosynthesis of macrophasetins, 3-decalinoyltetramic acids (DTAs) which feature a tetramate (pyrrolidine-2,4-dione) unit connected to a decalin fragment and that have potent bioactivities. Efflux pump that might be required for efficient secretion of macrophasetins. The sequence is that of MFS-type transporper mpsC from Macrophomina phaseolina (strain MS6) (Charcoal rot fungus).